Reading from the N-terminus, the 344-residue chain is UDP-3-O-acylglucosamine N-acyltransferase (344 aa).

H248 (proton acceptor) is an active-site residue.

It belongs to the transferase hexapeptide repeat family. LpxD subfamily. As to quaternary structure, homotrimer.

It catalyses the reaction a UDP-3-O-[(3R)-3-hydroxyacyl]-alpha-D-glucosamine + a (3R)-hydroxyacyl-[ACP] = a UDP-2-N,3-O-bis[(3R)-3-hydroxyacyl]-alpha-D-glucosamine + holo-[ACP] + H(+). Its pathway is bacterial outer membrane biogenesis; LPS lipid A biosynthesis. Functionally, catalyzes the N-acylation of UDP-3-O-acylglucosamine using 3-hydroxyacyl-ACP as the acyl donor. Is involved in the biosynthesis of lipid A, a phosphorylated glycolipid that anchors the lipopolysaccharide to the outer membrane of the cell. This is UDP-3-O-acylglucosamine N-acyltransferase from Prochlorococcus marinus subsp. pastoris (strain CCMP1986 / NIES-2087 / MED4).